We begin with the raw amino-acid sequence, 155 residues long: UPF0461 protein C5orf24 homolog (155 aa).

The segment covering 1-10 has biased composition (polar residues); that stretch reads MMHPVASSNP. Residues 1–20 are disordered; it reads MMHPVASSNPAFCGPGKPSC. S37 is subject to Phosphoserine. Positions 40–155 are disordered; sequence SKYSHTVNHK…QQAFRCSSDA (116 aa). Over residues 57–70 the composition is skewed to polar residues; it reads DPLNETHLQTTSGR. K75 participates in a covalent cross-link: Glycyl lysine isopeptide (Lys-Gly) (interchain with G-Cter in SUMO2). Residues 80 to 92 show a composition bias toward basic residues; sequence KKKNLNRSGKRGR. The segment covering 94-107 has biased composition (polar residues); sequence SGTTKSAGYRTSTG. At S121 the chain carries Phosphoserine.

It belongs to the UPF0461 family.

The polypeptide is UPF0461 protein C5orf24 homolog (Pongo abelii (Sumatran orangutan)).